A 271-amino-acid polypeptide reads, in one-letter code: Zinc-finger homeodomain protein 8 (271 aa).

Serine 16 carries the phosphoserine modification. The ZF-HD dimerization-type; degenerate zinc-finger motif lies at 56 to 107 (YKECLKNHAAGIGGHALDGCGEFMPSPSFNSNDPASLTCAACGCHRNFHRRE). The tract at residues 125-154 (HNRHQLPPPPPPHLAGIRSPDDDDSASPPP) is disordered. A DNA-binding region (homeobox) is located at residues 179–242 (RKRFRTKFSQ…NNKISGRSGA (64 aa)).

As to quaternary structure, homo- and heterodimer with other ZFHD proteins. Interacts with MIF1, MIF2 and MIF3; these interactions prevent nuclear localization and DNA-binding to inhibit transcription regulation activity. Binds to ZHD1, ZHD2, ZHD4, ZHD10 and ZHD11. Interacts with HIPP30. In terms of tissue distribution, mostly expressed in flowers and inflorescence.

It localises to the nucleus. Functionally, putative transcription factor. This Arabidopsis thaliana (Mouse-ear cress) protein is Zinc-finger homeodomain protein 8 (ZHD8).